We begin with the raw amino-acid sequence, 873 residues long: Cilia- and flagella-associated protein 58 (873 aa).

Coiled coils occupy residues 106–609 and 642–832; these read VDSA…VISE and ETQY…QKRK. The tract at residues 202 to 221 is disordered; the sequence is QEIQHRQNEASRESRKKEKL. The segment covering 204–221 has biased composition (basic and acidic residues); the sequence is IQHRQNEASRESRKKEKL.

This sequence belongs to the CFAP58 family. Interacts with ODFP2. As to expression, predominantly expressed in the testis. Also found at lower levels in ciliated cells and tissues such as neural progenitor cells and oviducts.

The protein resides in the cell projection. It is found in the cilium. Its subcellular location is the flagellum. It localises to the cytoplasm. The protein localises to the cytoskeleton. The protein resides in the microtubule organizing center. It is found in the centrosome. Has an essential role in the assembly and organization of the sperm flagellar axoneme. Required for the elongation of the primary cilium and sperm flagellar midpiece via modulation of the Notch signaling pathway. This Mus musculus (Mouse) protein is Cilia- and flagella-associated protein 58.